Consider the following 1476-residue polypeptide: Cystic fibrosis transmembrane conductance regulator (1476 aa).

Over 1–77 (MQKSPLEKAS…QLIHALRRCF (77 aa)) the chain is Cytoplasmic. A helical membrane pass occupies residues 78–98 (FWRFLFYGILLYLGEVTKAVQ). The 285-residue stretch at 81–365 (FLFYGILLYL…TAVQIWYDSF (285 aa)) folds into the ABC transmembrane type-1 1 domain. At 99–122 (PVLLGRIIASYDPENKVERSIAIY) the chain is on the extracellular side. Residues 123-146 (LGIGLCLLFIVRTLLLHPAIFGLH) form a helical membrane-spanning segment. At 147–195 (RIGMQMRTAMFSLIYKKTLKLSSRVLDKISIGQLVSLLSNNLNKFDEGL) the chain is on the cytoplasmic side. A helical transmembrane segment spans residues 196 to 216 (ALAHFIWIAPLQVTLLMGLLW). Topologically, residues 217-222 (DLLQFS) are extracellular. A helical transmembrane segment spans residues 223 to 243 (AFCGLGLLIILVIFQAILGKM). Topologically, residues 244 to 298 (MVKYRDQRAAKINERLVITSEIIDNIYSVKAYCWESAMEKMIENLREVELKMTRK) are cytoplasmic. Residues 299–319 (AAYMRFFTSSAFFFSGFFVVF) traverse the membrane as a helical segment. Topologically, residues 320-339 (LSVLPYTVINGIVLRKIFTT) are extracellular. The helical transmembrane segment at 340–358 (ISFCIVLRMSVTRQFPTAV) threads the bilayer. Residues 359-853 (QIWYDSFGMI…YLRYFTLHKG (495 aa)) are Cytoplasmic-facing. ATP contacts are provided by residues Trp401, 458 to 465 (GSTGSGKT), and Gln493. The region spanning 423-646 (SDENNVSFSH…RPDFSSKLMG (224 aa)) is the ABC transporter 1 domain. A lipid anchor (S-palmitoyl cysteine) is attached at Cys524. Residues Ser549 and Ser660 each carry the phosphoserine modification. The interval 654–826 (TEERRSSILT…EEINEEDLKE (173 aa)) is disordered R region. Ser670 carries the post-translational modification Phosphoserine; by PKA. Ser684, Ser698, and Ser710 each carry phosphoserine. Residue Thr715 is modified to Phosphothreonine. Ser732, Ser763, Ser785, Ser790, and Ser808 each carry phosphoserine. A helical transmembrane segment spans residues 854–874 (LLLVLIWCVLVFLVEVAASLF). The ABC transmembrane type-1 2 domain occupies 854 to 1153 (LLLVLIWCVL…SSIDTDSLMR (300 aa)). The Extracellular segment spans residues 875-913 (VLWLLKNNPVNSGNNGTKISNSSYVVIITSTSFYYIFYI). Asn889 and Asn895 each carry an N-linked (GlcNAc...) asparagine glycan. A discontinuously helical transmembrane segment spans residues 914 to 934 (YVGVADTLLALSLFRGLPLVH). At 935–985 (TLITASKILHRKMLHSILHAPMSTISKLKAGGILNRFSKDIAILDDFLPLT) the chain is on the cytoplasmic side. A helical transmembrane segment spans residues 986-1006 (IFDFIQLVFIVIGAIIVVSAL). The Extracellular segment spans residues 1007–1008 (QP). Residues 1009–1029 (YIFLATVPGLVVFILLRAYFL) traverse the membrane as a helical segment. The Cytoplasmic portion of the chain corresponds to 1030–1090 (HTAQQLKQLE…TANWFMYLAT (61 aa)). Residues 1091-1111 (LRWFQMRIDMIFVLFFIVVTF) traverse the membrane as a helical segment. Residues 1112–1125 (ISILTTGEGEGTAG) lie on the Extracellular side of the membrane. The helical transmembrane segment at 1126 to 1146 (IILTLAMNIMSTLQWAVNSSI) threads the bilayer. Topologically, residues 1147–1476 (DTDSLMRSVS…TEEEVQETRL (330 aa)) are cytoplasmic. The ABC transporter 2 domain maps to 1208–1439 (VKDLTVKYMD…KSIFQQAISS (232 aa)). Residues Tyr1215 and 1240–1247 (GRTGSGKS) each bind ATP. An interaction with GORASP2 region spans residues 1382–1476 (RVLKQAFAGC…TEEEVQETRL (95 aa)). A lipid anchor (S-palmitoyl cysteine) is attached at Cys1391. 2 positions are modified to phosphoserine: Ser1440 and Ser1452. The disordered stretch occupies residues 1446 to 1476 (FQGRHSSKHKPRTQITALKEETEEEVQETRL). Residues 1466 to 1476 (ETEEEVQETRL) are compositionally biased toward acidic residues. Positions 1474–1476 (TRL) match the PDZ-binding motif.

It belongs to the ABC transporter superfamily. ABCC family. CFTR transporter (TC 3.A.1.202) subfamily. Monomer; does not require oligomerization for channel activity. May form oligomers in the membrane. Interacts with SLC26A3, SLC26A6 and NHERF1. Interacts with SHANK2. Interacts with MYO6. Interacts (via C-terminus) with GOPC (via PDZ domain); this promotes CFTR internalization and thereby decreases channel activity. Interacts with SLC4A7 through NHERF1. Found in a complex with MYO5B and RAB11A. Interacts with ANO1. Interacts with SLC26A8. Interacts with AHCYL1; the interaction increases CFTR activity. Interacts with CSE1L. The core-glycosylated form interacts with GORASP2 (via PDZ GRASP-type 1 domain) in respone to ER stress. Interacts with MARCHF2; the interaction leads to CFTR ubiqtuitination and degradation. Interacts with ADGRG2. Post-translationally, N-glycosylated. In terms of processing, phosphorylated; cAMP treatment promotes phosphorylation and activates the channel. Dephosphorylation decreases the ATPase activity (in vitro). Phosphorylation at PKA sites activates the channel. Phosphorylation at PKC sites enhances the response to phosphorylation by PKA. Phosphorylated by AMPK; this inhibits channel activity. Ubiquitinated, leading to its degradation in the lysosome. Deubiquitination by USP10 in early endosomes enhances its endocytic recycling to the cell membrane. Ubiquitinated by RNF185 during ER stress. Ubiquitinated by MARCHF2. Expressed in the epididymis (at protein level). In the initial segment of the epididymis, detected on both the luminal and basolateral sides of the ducts where it is expressed in the duct columnar cells as well as in the interstitial smooth muscle cells. Expressed in sperm in the caput. In the cauda, detected along the luminal border but not continuously and is also expressed on the basolateral surface. Within the caudal lumen, detected on sperm. Isoform 1: Expressed in a variety of epithelial tissues including colon, kidney, lung, small intestine, pancreatic duct and testis. Isoform 2: Expressed only in testis. Isoform 3: Expressed only in testis.

It localises to the apical cell membrane. The protein resides in the early endosome membrane. Its subcellular location is the cell membrane. It is found in the recycling endosome membrane. The protein localises to the endoplasmic reticulum membrane. It localises to the nucleus. It carries out the reaction ATP + H2O + closed Cl(-) channel = ADP + phosphate + open Cl(-) channel.. The enzyme catalyses chloride(in) = chloride(out). The catalysed reaction is hydrogencarbonate(in) = hydrogencarbonate(out). It catalyses the reaction ATP + H2O = ADP + phosphate + H(+). Functionally, epithelial ion channel that plays an important role in the regulation of epithelial ion and water transport and fluid homeostasis. Mediates the transport of chloride ions across the cell membrane. Possesses an intrinsic ATPase activity and utilizes ATP to gate its channel; the passive flow of anions through the channel is gated by cycles of ATP binding and hydrolysis by the ATP-binding domains. The ion channel is also permeable to HCO(3)(-); selectivity depends on the extracellular chloride concentration. Exerts its function also by modulating the activity of other ion channels and transporters. Contributes to the regulation of the pH and the ion content of the epithelial fluid layer. Modulates the activity of the epithelial sodium channel (ENaC) complex, in part by regulating the cell surface expression of the ENaC complex. May regulate bicarbonate secretion and salvage in epithelial cells by regulating the transporter SLC4A7. Can inhibit the chloride channel activity of ANO1. Plays a role in the chloride and bicarbonate homeostasis during sperm epididymal maturation and capacitation. The protein is Cystic fibrosis transmembrane conductance regulator of Mus musculus (Mouse).